The chain runs to 130 residues: Transcription antitermination protein NusB (130 aa).

This sequence belongs to the NusB family.

In terms of biological role, involved in transcription antitermination. Required for transcription of ribosomal RNA (rRNA) genes. Binds specifically to the boxA antiterminator sequence of the ribosomal RNA (rrn) operons. The sequence is that of Transcription antitermination protein NusB from Geobacillus kaustophilus (strain HTA426).